Reading from the N-terminus, the 311-residue chain is Coproporphyrin III ferrochelatase (311 aa).

Fe-coproporphyrin III is bound by residues Tyr12, Arg29, 45 to 46 (RY), Ser53, and Tyr124. The Fe(2+) site is built by His182 and Glu263.

It belongs to the ferrochelatase family.

It is found in the cytoplasm. It carries out the reaction Fe-coproporphyrin III + 2 H(+) = coproporphyrin III + Fe(2+). It functions in the pathway porphyrin-containing compound metabolism; protoheme biosynthesis. Involved in coproporphyrin-dependent heme b biosynthesis. Catalyzes the insertion of ferrous iron into coproporphyrin III to form Fe-coproporphyrin III. The sequence is that of Coproporphyrin III ferrochelatase from Bacillus mycoides (strain KBAB4) (Bacillus weihenstephanensis).